We begin with the raw amino-acid sequence, 437 residues long: Glutamate-1-semialdehyde 2,1-aminomutase (437 aa).

K274 bears the N6-(pyridoxal phosphate)lysine mark.

It belongs to the class-III pyridoxal-phosphate-dependent aminotransferase family. HemL subfamily. In terms of assembly, homodimer. The cofactor is pyridoxal 5'-phosphate.

It is found in the cytoplasm. It carries out the reaction (S)-4-amino-5-oxopentanoate = 5-aminolevulinate. It participates in porphyrin-containing compound metabolism; protoporphyrin-IX biosynthesis; 5-aminolevulinate from L-glutamyl-tRNA(Glu): step 2/2. This chain is Glutamate-1-semialdehyde 2,1-aminomutase, found in Paracidovorax citrulli (strain AAC00-1) (Acidovorax citrulli).